A 101-amino-acid polypeptide reads, in one-letter code: Small ribosomal subunit protein bS18c (101 aa).

The protein belongs to the bacterial ribosomal protein bS18 family. In terms of assembly, part of the 30S ribosomal subunit.

It is found in the plastid. The protein localises to the chloroplast. The protein is Small ribosomal subunit protein bS18c of Populus alba (White poplar).